The following is a 619-amino-acid chain: DNA mismatch repair protein MutL (619 aa).

Low complexity predominate over residues 364–375 (EPASAREPAAPR). Residues 364-399 (EPASAREPAAPRYSTSSGATGGRQPAASWPHAQPGY) are disordered.

This sequence belongs to the DNA mismatch repair MutL/HexB family.

Its function is as follows. This protein is involved in the repair of mismatches in DNA. It is required for dam-dependent methyl-directed DNA mismatch repair. May act as a 'molecular matchmaker', a protein that promotes the formation of a stable complex between two or more DNA-binding proteins in an ATP-dependent manner without itself being part of a final effector complex. The sequence is that of DNA mismatch repair protein MutL from Citrobacter koseri (strain ATCC BAA-895 / CDC 4225-83 / SGSC4696).